The primary structure comprises 657 residues: MMLPKSLTQGLLLAMLVGTAAMVQPYHLLSLLTSGQGALDRTALDGLLNTLVARVHCTDGPCEKCLSVETALALGKPDKPQLAPESVLESRYITYLSAAAALYLNDPEKTCKDIRAGLLASHVDDYLAKLESPEAMTLGLSQLLQKIEAHDASQPTREETCVDVPQLLEEAEEAGVSRSPGLVLTALLDHVLNGSCFQGLPSPQYFVDFVFRQLSSKPRNITLPELEDLMHHLGVGGEDHSDHGDHVDHSHLDREANHQDSELHATHNSSSSVWDTLCLSAKDVMAVYGLSEEAGVSPQAWAQLTPALVQQQLSEACSSSPIIHVQDQLSQAERYLYGSLATLLICLCAVFGLLLLTCAKCSTATHYIMQTFLSLAVGALTGDALLHLIPKVLGLHTHSGEVHSHEEESIGGQSTWRLLAVLGGFYIFFLFESFFNLLLPRDQDHEKDGPCSHGGHSHGISLQLSPSNLRQSKQPHESSRSDLVTEETPELLNPDTRRLRAELRMLPYLITLGDAVHNFADGLAVGAAFSSTWKTGLATSLAVFCHELPHELGDFAALLHAGLTVKRALLLNLASALTAFAGLYVALAVGVGEEGETWILAVATGLFLYVALCDMLPAMMNVRDQRPWLLFLLHNVGLLGGWTILLLLSLYEDSITF.

A signal peptide spans 1–22; the sequence is MMLPKSLTQGLLLAMLVGTAAM. Topologically, residues 23 to 335 are extracellular; sequence VQPYHLLSLL…QDQLSQAERY (313 aa). Asparagine 193, asparagine 220, and asparagine 268 each carry an N-linked (GlcNAc...) asparagine glycan. Residues 336–356 form a helical membrane-spanning segment; the sequence is LYGSLATLLICLCAVFGLLLL. The Cytoplasmic portion of the chain corresponds to 357–374; the sequence is TCAKCSTATHYIMQTFLS. The chain crosses the membrane as a helical span at residues 375-395; sequence LAVGALTGDALLHLIPKVLGL. Residues 396-417 are Extracellular-facing; the sequence is HTHSGEVHSHEEESIGGQSTWR. A helical transmembrane segment spans residues 418–438; sequence LLAVLGGFYIFFLFESFFNLL. The Cytoplasmic segment spans residues 439-508; it reads LPRDQDHEKD…LRAELRMLPY (70 aa). Positions 462 to 464 match the Essential for SLC39A4 endocytosis motif; that stretch reads LQL. The tract at residues 467–491 is disordered; the sequence is SNLRQSKQPHESSRSDLVTEETPEL. A helical membrane pass occupies residues 509–528; that stretch reads LITLGDAVHNFADGLAVGAA. Zn(2+)-binding residues include histidine 517, asparagine 518, and aspartate 521. The Extracellular segment spans residues 529–536; that stretch reads FSSTWKTG. The helical transmembrane segment at 537-563 threads the bilayer; it reads LATSLAVFCHELPHELGDFAALLHAGL. The Zn(2+) site is built by histidine 546, glutamate 547, and histidine 550. The Cytoplasmic portion of the chain corresponds to 564-568; it reads TVKRA. Residues 569-589 form a helical membrane-spanning segment; it reads LLLNLASALTAFAGLYVALAV. Over 590–597 the chain is Extracellular; it reads GVGEEGET. A helical transmembrane segment spans residues 598–618; sequence WILAVATGLFLYVALCDMLPA. The Cytoplasmic segment spans residues 619–627; sequence MMNVRDQRP. The chain crosses the membrane as a helical span at residues 628-648; the sequence is WLLFLLHNVGLLGGWTILLLL. The Extracellular portion of the chain corresponds to 649–657; it reads SLYEDSITF.

The protein belongs to the ZIP transporter (TC 2.A.5) family. As to quaternary structure, homodimer; homodimerization is mediated by the transmembrane domain. In terms of processing, the extracellular N-terminal ectodomain is cleaved when cells are Zn(2+) deficient, N-terminally cleaved SLC39A4 is internalized at a faster rate. Under excess Zn(2+) conditions, SLC39A4 on the cell surface is rapidly endocytosed, ubiquitinated and degraded. Post-translationally, glycosylated. As to expression, expressed in duodenum, jejunum, and ileum.

Its subcellular location is the cell membrane. It localises to the recycling endosome membrane. It is found in the apical cell membrane. The enzyme catalyses Zn(2+)(in) = Zn(2+)(out). In terms of biological role, selective transporter that mediates the uptake of Zn(2+). Plays an essential role for dietary zinc uptake from small intestine. The Zn(2+) uniporter activity is regulated by zinc availability. Also exhibits polyspecific binding and transport of Cu(2+), Cd(2+) and possibly Ni(2+) but at higher concentrations. This chain is Zinc transporter ZIP4 (Slc39a4), found in Rattus norvegicus (Rat).